The chain runs to 378 residues: Mitogen-activated protein kinase mpkC (378 aa).

The Protein kinase domain occupies 20–300 (YVNPQPIGMG…AQDALRYPYL (281 aa)). ATP-binding positions include 26-34 (IGMGSFGLV) and Lys-49. Asp-141 acts as the Proton acceptor in catalysis. Position 171 is a phosphothreonine (Thr-171). The TXY signature appears at 171-173 (TGY). Tyr-173 is subject to Phosphotyrosine.

This sequence belongs to the protein kinase superfamily. Ser/Thr protein kinase family. MAP kinase subfamily. HOG1 sub-subfamily. As to quaternary structure, interacts with sakA upon osmotic and cell wall stresses. Mg(2+) serves as cofactor. In terms of processing, dually phosphorylated on Thr-171 and Tyr-173, which activates the enzyme.

The protein resides in the cytoplasm. It is found in the nucleus. The enzyme catalyses L-seryl-[protein] + ATP = O-phospho-L-seryl-[protein] + ADP + H(+). It catalyses the reaction L-threonyl-[protein] + ATP = O-phospho-L-threonyl-[protein] + ADP + H(+). Its activity is regulated as follows. Activated by tyrosine and threonine phosphorylation. In terms of biological role, mitogen-activated protein kinase; part of an osmotic and general signal pathways involved in regulation of the response to the cell wall damage, oxidative stress, drug resistance, and establishment of infection. Required for growth on media where sorbitol or mannitol is the sole carbon source. With sakA, plays a redundant or cooperative role in the conidial stress resistance. Also plays a supportive role in osmotic stress adaptation when sakA is deficient. Involved in paradoxical growth, the cell wall integrity (CWI) pathway and biofilm formation. Acts by modulating sakA activity upon exposure to several types o stresses and during cell wall biosynthesis. Also collaborates with sakA to allow ful virulence in a neutropenic murine model of invasive pulmonary aspergillosis. MpkC and sakA have both independent and collaborative functions during the transcriptional response to transient osmotic stress, and mpkC plays a major role in the modulation of the response to DNA metabolism while activating mitochondrial functions and cation transport. This Aspergillus fumigatus (strain ATCC MYA-4609 / CBS 101355 / FGSC A1100 / Af293) (Neosartorya fumigata) protein is Mitogen-activated protein kinase mpkC (mpkC).